The chain runs to 204 residues: Large ribosomal subunit protein uL4 (204 aa).

Positions 49-90 (KVKGMGEVSGTTKKPYRQKGTGSARQGSLRAPQYRTGGAVHG) are disordered.

It belongs to the universal ribosomal protein uL4 family. In terms of assembly, part of the 50S ribosomal subunit.

In terms of biological role, one of the primary rRNA binding proteins, this protein initially binds near the 5'-end of the 23S rRNA. It is important during the early stages of 50S assembly. It makes multiple contacts with different domains of the 23S rRNA in the assembled 50S subunit and ribosome. Forms part of the polypeptide exit tunnel. The protein is Large ribosomal subunit protein uL4 of Gluconacetobacter diazotrophicus (strain ATCC 49037 / DSM 5601 / CCUG 37298 / CIP 103539 / LMG 7603 / PAl5).